We begin with the raw amino-acid sequence, 214 residues long: Nucleoplasmin-2 (214 aa).

The disordered stretch occupies residues 119 to 214; it reads ERYEASDLTW…ARAKKPGFKK (96 aa). The span at 127–155 shows a compositional bias: acidic residues; the sequence is TWEEEEEEEGEEEEEEEEDDEDEDADISL. The tract at residues 129-152 is acidic tract A2; that stretch reads EEEEEEEGEEEEEEEEDDEDEDAD. Positions 165–180 match the Bipartite nuclear localization signal motif; that stretch reads KRLVPQKQASVAKKKK. Positions 181–197 are enriched in basic and acidic residues; it reads LEKEEEEIRASVRDKSP. The span at 198-214 shows a compositional bias: basic residues; it reads VKKAKATARAKKPGFKK.

This sequence belongs to the nucleoplasmin family. As to quaternary structure, homopentamer, when bound to H2A-H2B dimers only. Homodecamer of two stacked pentamers, when bound to H2A-H2B dimers and H3-H4 tetramers simultaneously.

It localises to the nucleus. Core histones chaperone involved in chromatin reprogramming, specially during fertilization and early embryonic development. Probably involved in sperm DNA decondensation during fertilization. This chain is Nucleoplasmin-2 (NPM2), found in Homo sapiens (Human).